Consider the following 167-residue polypeptide: Small ribosomal subunit protein mS25 (167 aa).

It belongs to the mitochondrion-specific ribosomal protein mS25 family. In terms of assembly, component of the mitochondrial ribosome small subunit (28S) which comprises a 12S rRNA and about 30 distinct proteins.

Its subcellular location is the mitochondrion. In Drosophila melanogaster (Fruit fly), this protein is Small ribosomal subunit protein mS25 (mRpS25).